Here is a 322-residue protein sequence, read N- to C-terminus: Deoxyhypusine hydroxylase (322 aa).

HEAT-like PBS-type repeat units lie at residues 76 to 102, 109 to 135, 234 to 260, and 267 to 293; these read LKHE…VMLD, VRHE…SRRE, FKHE…VLKR, and VRHE…HLQD. Fe cation is bound by residues histidine 78, glutamate 79, histidine 111, glutamate 112, histidine 236, glutamate 237, histidine 269, and glutamate 270.

It belongs to the deoxyhypusine hydroxylase family. Requires Fe(2+) as cofactor.

The protein localises to the cytoplasm. Its subcellular location is the nucleus. It catalyses the reaction [eIF5A protein]-deoxyhypusine + AH2 + O2 = [eIF5A protein]-hypusine + A + H2O. The protein operates within protein modification; eIF5A hypusination. Catalyzes the hydroxylation of the N(6)-(4-aminobutyl)-L-lysine intermediate to form hypusine, an essential post-translational modification only found in mature eIF-5A factor. The polypeptide is Deoxyhypusine hydroxylase (Eremothecium gossypii (strain ATCC 10895 / CBS 109.51 / FGSC 9923 / NRRL Y-1056) (Yeast)).